A 147-amino-acid chain; its full sequence is NAD(P)H-quinone oxidoreductase subunit N (147 aa).

It belongs to the complex I NdhN subunit family. In terms of assembly, NDH-1 can be composed of about 15 different subunits; different subcomplexes with different compositions have been identified which probably have different functions.

The protein resides in the cellular thylakoid membrane. It catalyses the reaction a plastoquinone + NADH + (n+1) H(+)(in) = a plastoquinol + NAD(+) + n H(+)(out). The enzyme catalyses a plastoquinone + NADPH + (n+1) H(+)(in) = a plastoquinol + NADP(+) + n H(+)(out). NDH-1 shuttles electrons from an unknown electron donor, via FMN and iron-sulfur (Fe-S) centers, to quinones in the respiratory and/or the photosynthetic chain. The immediate electron acceptor for the enzyme in this species is believed to be plastoquinone. Couples the redox reaction to proton translocation, and thus conserves the redox energy in a proton gradient. Cyanobacterial NDH-1 also plays a role in inorganic carbon-concentration. This is NAD(P)H-quinone oxidoreductase subunit N from Synechococcus sp. (strain JA-3-3Ab) (Cyanobacteria bacterium Yellowstone A-Prime).